Here is a 404-residue protein sequence, read N- to C-terminus: Zinc finger CCCH domain-containing protein 3 (404 aa).

5 consecutive C3H1-type zinc fingers follow at residues 47 to 75 (RPGERDCQFYLRTGLCGYGSSCRYNHPTH), 90 to 118 (RIGQPDCEYFLKTGACKYGPTCKYHHPKD), 135 to 163 (RLGEKPCPYYLRTGTCRFGVACKFHHPQP), 261 to 289 (SSDQPECRFFMNTGTCKYGDDCKYSHPGV), and 307 to 335 (RPGQPACGNFRSYGFCKFGPNCKFDHPML). A compositionally biased stretch (polar residues) spans 350-374 (FASPVTTHQRISPTPNRSDSKSLSN). Residues 350–404 (FASPVTTHQRISPTPNRSDSKSLSNGKPDVKKESSETEKPDNGEVQDLSEDASSP) are disordered. Over residues 377–391 (PDVKKESSETEKPDN) the composition is skewed to basic and acidic residues.

The protein localises to the nucleus. Possesses RNA-binding and ribonuclease activities in vitro. In Arabidopsis thaliana (Mouse-ear cress), this protein is Zinc finger CCCH domain-containing protein 3.